The primary structure comprises 194 residues: Peptidyl-tRNA hydrolase (194 aa).

Residue tyrosine 16 coordinates tRNA. Catalysis depends on histidine 21, which acts as the Proton acceptor. 3 residues coordinate tRNA: phenylalanine 67, asparagine 69, and asparagine 115.

Belongs to the PTH family. As to quaternary structure, monomer.

The protein resides in the cytoplasm. It catalyses the reaction an N-acyl-L-alpha-aminoacyl-tRNA + H2O = an N-acyl-L-amino acid + a tRNA + H(+). Its function is as follows. Hydrolyzes ribosome-free peptidyl-tRNAs (with 1 or more amino acids incorporated), which drop off the ribosome during protein synthesis, or as a result of ribosome stalling. Catalyzes the release of premature peptidyl moieties from peptidyl-tRNA molecules trapped in stalled 50S ribosomal subunits, and thus maintains levels of free tRNAs and 50S ribosomes. This chain is Peptidyl-tRNA hydrolase, found in Sodalis glossinidius (strain morsitans).